Consider the following 522-residue polypeptide: Vicilin-like seed storage protein At4g36700 (522 aa).

Positions 1 to 25 (MTRFAVLPLSVLLLVLLFLCTESLA) are cleaved as a signal peptide. N-linked (GlcNAc...) asparagine glycosylation is found at Asn-206, Asn-303, Asn-341, Asn-374, and Asn-414. The Cupin type-1 domain occupies 265–421 (FNVFESEPDF…SLNVSSVTID (157 aa)). The segment at 457 to 522 (DERKRRHDER…EWEMEGEEES (66 aa)) is disordered. Basic and acidic residues-rich tracts occupy residues 466–491 (RKKE…EKKR) and 501–515 (EELR…KEWE).

This sequence belongs to the 7S seed storage protein family.

Seed storage protein. The chain is Vicilin-like seed storage protein At4g36700 from Arabidopsis thaliana (Mouse-ear cress).